We begin with the raw amino-acid sequence, 252 residues long: Triosephosphate isomerase (252 aa).

Substrate is bound at residue 9–11; sequence NWK. Residue His95 is the Electrophile of the active site. Catalysis depends on Glu167, which acts as the Proton acceptor. Residues Gly173, Ser211, and 232–233 each bind substrate; that span reads GG.

Belongs to the triosephosphate isomerase family. In terms of assembly, homodimer.

The protein resides in the cytoplasm. The catalysed reaction is D-glyceraldehyde 3-phosphate = dihydroxyacetone phosphate. It functions in the pathway carbohydrate biosynthesis; gluconeogenesis. It participates in carbohydrate degradation; glycolysis; D-glyceraldehyde 3-phosphate from glycerone phosphate: step 1/1. Its function is as follows. Involved in the gluconeogenesis. Catalyzes stereospecifically the conversion of dihydroxyacetone phosphate (DHAP) to D-glyceraldehyde-3-phosphate (G3P). The chain is Triosephosphate isomerase from Marinobacter nauticus (strain ATCC 700491 / DSM 11845 / VT8) (Marinobacter aquaeolei).